The sequence spans 326 residues: Tetraacyldisaccharide 4'-kinase (326 aa).

Residue 55–62 participates in ATP binding; the sequence is TAGGNGKT.

Belongs to the LpxK family.

It carries out the reaction a lipid A disaccharide + ATP = a lipid IVA + ADP + H(+). It functions in the pathway glycolipid biosynthesis; lipid IV(A) biosynthesis; lipid IV(A) from (3R)-3-hydroxytetradecanoyl-[acyl-carrier-protein] and UDP-N-acetyl-alpha-D-glucosamine: step 6/6. Its function is as follows. Transfers the gamma-phosphate of ATP to the 4'-position of a tetraacyldisaccharide 1-phosphate intermediate (termed DS-1-P) to form tetraacyldisaccharide 1,4'-bis-phosphate (lipid IVA). The sequence is that of Tetraacyldisaccharide 4'-kinase from Klebsiella pneumoniae subsp. pneumoniae (strain ATCC 700721 / MGH 78578).